A 61-amino-acid chain; its full sequence is Weak toxin CM-1c (61 aa).

Cystine bridges form between cysteine 3/cysteine 21, cysteine 14/cysteine 37, cysteine 41/cysteine 53, and cysteine 54/cysteine 59.

The protein belongs to the three-finger toxin family. Short-chain subfamily. Orphan group VI sub-subfamily. Expressed by the venom gland.

The protein resides in the secreted. This is Weak toxin CM-1c from Hemachatus haemachatus (Rinkhals).